The following is an 89-amino-acid chain: Small ribosomal subunit protein uS14A (89 aa).

The protein belongs to the universal ribosomal protein uS14 family. As to quaternary structure, part of the 30S ribosomal subunit. Contacts proteins S3 and S10.

Functionally, binds 16S rRNA, required for the assembly of 30S particles and may also be responsible for determining the conformation of the 16S rRNA at the A site. This is Small ribosomal subunit protein uS14A from Listeria welshimeri serovar 6b (strain ATCC 35897 / DSM 20650 / CCUG 15529 / CIP 8149 / NCTC 11857 / SLCC 5334 / V8).